The chain runs to 359 residues: GTP cyclohydrolase FolE2 (359 aa).

It belongs to the GTP cyclohydrolase IV family.

The catalysed reaction is GTP + H2O = 7,8-dihydroneopterin 3'-triphosphate + formate + H(+). It participates in cofactor biosynthesis; 7,8-dihydroneopterin triphosphate biosynthesis; 7,8-dihydroneopterin triphosphate from GTP: step 1/1. In terms of biological role, converts GTP to 7,8-dihydroneopterin triphosphate. This chain is GTP cyclohydrolase FolE2, found in Cereibacter sphaeroides (strain ATCC 17025 / ATH 2.4.3) (Rhodobacter sphaeroides).